A 95-amino-acid chain; its full sequence is Cliotide T5 (95 aa).

A cross-link (cyclopeptide (Gly-Asn)) is located at residues 1-30 (GIPCGESCVFIPCISTVIGCSCKNKVCYRN). 3 cysteine pairs are disulfide-bonded: Cys4–Cys20, Cys8–Cys22, and Cys13–Cys27. A propeptide spans 31 to 95 (HVIAAEAKTM…KDHLKMSITN (65 aa)) (removed in mature form).

In terms of processing, contains 3 disulfide bonds. Post-translationally, this is a cyclic peptide. Expressed in stem, shoot, root, leaf, pod and nodule but not in flower and seed (at protein level).

Its function is as follows. Probably participates in a plant defense mechanism. This chain is Cliotide T5, found in Clitoria ternatea (Butterfly pea).